Consider the following 37-residue polypeptide: Photosystem II reaction center protein L (37 aa).

Residues 1–13 (MEPNPNRQPVELN) lie on the Cytoplasmic side of the membrane. Residues 14–35 (RTSLYLGLLLILVLALLFSSYF) form a helical membrane-spanning segment. Over 36–37 (FN) the chain is Lumenal.

As to quaternary structure, PSII is composed of 1 copy each of membrane proteins PsbA, PsbB, PsbC, PsbD, PsbE, PsbF, PsbH, PsbI, PsbJ, PsbK, PsbL, PsbM, PsbT, PsbX, PsbY, PsbZ, Psb30/Ycf12, peripheral proteins PsbO, CyanoQ (PsbQ), PsbU, PsbV and a large number of cofactors. It forms dimeric complexes. Part of a photosystem II (PSII) assembly intermediate complex PSII-I; crystallized from a strain deleted of psbJ, it forms monomeric PSII before addition of the oxygen evolving complex. PSII-I includes 3 assembly factors not found in mature PSII (Psb27, Psb28 and Psb34). The cofactor is PSII binds multiple chlorophylls, carotenoids and specific lipids..

It is found in the cellular thylakoid membrane. Functionally, one of the components of the core complex of photosystem II (PSII). PSII is a light-driven water:plastoquinone oxidoreductase that uses light energy to abstract electrons from H(2)O, generating O(2) and a proton gradient subsequently used for ATP formation. It consists of a core antenna complex that captures photons, and an electron transfer chain that converts photonic excitation into a charge separation. This subunit is found at the monomer-monomer interface and is required for correct PSII assembly and/or dimerization. This subunit may make specific contacts with lipid(s). The protein is Photosystem II reaction center protein L of Thermosynechococcus vestitus (strain NIES-2133 / IAM M-273 / BP-1).